We begin with the raw amino-acid sequence, 590 residues long: Probable metalloendopeptidase G1-type (590 aa).

Position 41 (histidine 41) interacts with Zn(2+). Glutamate 44 is an active-site residue. Residue histidine 45 coordinates Zn(2+).

It belongs to the peptidase M44 family. Zn(2+) is required as a cofactor.

Functionally, seems to be involved in viral proteins maturation by cleavage at Ala-Gly-|-Xaa motifs. This chain is Probable metalloendopeptidase G1-type, found in Oryctolagus cuniculus (Rabbit).